The primary structure comprises 331 residues: Tryptophan--tRNA ligase (331 aa).

ATP is bound by residues 10-12 and 18-19; these read QPS and GN. Residues 11–19 carry the 'HIGH' region motif; sequence PSGQLTLGN. Residue aspartate 133 coordinates L-tryptophan. ATP-binding positions include 145–147, valine 184, and 193–197; these read GED and KMSKS. The 'KMSKS' region motif lies at 193–197; it reads KMSKS.

The protein belongs to the class-I aminoacyl-tRNA synthetase family. As to quaternary structure, homodimer.

The protein resides in the cytoplasm. The catalysed reaction is tRNA(Trp) + L-tryptophan + ATP = L-tryptophyl-tRNA(Trp) + AMP + diphosphate + H(+). Its function is as follows. Catalyzes the attachment of tryptophan to tRNA(Trp). This is Tryptophan--tRNA ligase from Listeria innocua serovar 6a (strain ATCC BAA-680 / CLIP 11262).